We begin with the raw amino-acid sequence, 554 residues long: 3-(3-hydroxy-phenyl)propionate/3-hydroxycinnamic acid hydroxylase (554 aa).

Residues 17–46 and 285–295 contribute to the FAD site; these read QVAI…VVEK and FRIDRVLLAGD.

The protein belongs to the PheA/TfdB FAD monooxygenase family. The cofactor is FAD.

The catalysed reaction is 3-(3-hydroxyphenyl)propanoate + NADH + O2 + H(+) = 3-(2,3-dihydroxyphenyl)propanoate + NAD(+) + H2O. It catalyses the reaction (2E)-3-(3-hydroxyphenyl)prop-2-enoate + NADH + O2 + H(+) = (2E)-3-(2,3-dihydroxyphenyl)prop-2-enoate + NAD(+) + H2O. The protein operates within aromatic compound metabolism; 3-phenylpropanoate degradation. Functionally, catalyzes the insertion of one atom of molecular oxygen into position 2 of the phenyl ring of 3-(3-hydroxyphenyl)propionate (3-HPP) and hydroxycinnamic acid (3HCI). This is 3-(3-hydroxy-phenyl)propionate/3-hydroxycinnamic acid hydroxylase from Escherichia coli (strain K12 / DH10B).